The following is a 179-amino-acid chain: ATP-dependent protease subunit HslV (179 aa).

The active site involves threonine 5. Positions 164 and 167 each coordinate Na(+).

This sequence belongs to the peptidase T1B family. HslV subfamily. A double ring-shaped homohexamer of HslV is capped on each side by a ring-shaped HslU homohexamer. The assembly of the HslU/HslV complex is dependent on binding of ATP.

It is found in the cytoplasm. It catalyses the reaction ATP-dependent cleavage of peptide bonds with broad specificity.. Its activity is regulated as follows. Allosterically activated by HslU binding. Functionally, protease subunit of a proteasome-like degradation complex believed to be a general protein degrading machinery. The chain is ATP-dependent protease subunit HslV from Carboxydothermus hydrogenoformans (strain ATCC BAA-161 / DSM 6008 / Z-2901).